The chain runs to 164 residues: Endoribonuclease YbeY (164 aa).

His117, His121, and His127 together coordinate Zn(2+).

This sequence belongs to the endoribonuclease YbeY family. It depends on Zn(2+) as a cofactor.

It localises to the cytoplasm. In terms of biological role, single strand-specific metallo-endoribonuclease involved in late-stage 70S ribosome quality control and in maturation of the 3' terminus of the 16S rRNA. This chain is Endoribonuclease YbeY, found in Mycoplasma mycoides subsp. mycoides SC (strain CCUG 32753 / NCTC 10114 / PG1).